Reading from the N-terminus, the 100-residue chain is MAKKSLIERNKKRQRLVEKYFHLRQSLKKEMNQTLSVEEKWIFYKKLQALPRNSAGTRIKNICFITGRSKAYYRDFGISRHTFREMAHACLLPGLTKSSW.

It belongs to the universal ribosomal protein uS14 family. Part of the 30S ribosomal subunit.

The protein resides in the plastid. Its subcellular location is the chloroplast. In terms of biological role, binds 16S rRNA, required for the assembly of 30S particles. This chain is Small ribosomal subunit protein uS14c, found in Chara vulgaris (Common stonewort).